The chain runs to 1147 residues: Myosin light chain kinase, smooth muscle (1147 aa).

Residues 1–41 are actin-binding; that stretch reads MDFRANLQRQVKPKTVSEEERKVHSPQQVDFRSVLAKKGTP. Residues 1 to 330 form a disordered region; the sequence is MDFRANLQRQ…PPASPGTAPT (330 aa). A calmodulin-binding region spans residues 26–41; it reads PQQVDFRSVLAKKGTP. Pro residues predominate over residues 43-55; sequence TPVPEKAPPPKPA. 2 consecutive repeat copies span residues 100–111 and 112–123. Positions 100–288 are 16 X 12 AA tandem repeats; it reads SLKPVANAKP…KAVANAKPAE (189 aa). The 3; truncated repeat unit spans residues 124-132; that stretch reads TLKPVANAE. Tandem repeats lie at residues 133–144, 145–156, 157–168, 169–180, 181–192, 193–204, 205–216, 217–228, 229–240, 241–252, 253–264, 265–276, and 277–288. Residues 292–692 form an actin-binding (calcium/calmodulin-insensitive) region; sequence PAGKEELKKE…TVTVNTEQKV (401 aa). The segment covering 293–320 has biased composition (basic and acidic residues); sequence AGKEELKKEVQNDVNCKREKAGAADNEK. Ig-like C2-type domains follow at residues 329-417 and 469-557; these read PTFK…CHVT and PQIP…VNLT. An intrachain disulfide couples Cys-350 to Cys-401. Disordered stretches follow at residues 424 to 476 and 644 to 678; these read SENA…QFPE and SEPS…KEPE. Pro residues predominate over residues 459–472; that stretch reads PKTPPKAATPPQIP. The Fibronectin type-III domain occupies 565-657; sequence PAGTPCASDI…QESELTTVGE (93 aa). The span at 644–653 shows a compositional bias: polar residues; that stretch reads SEPSQESELT. Residues 662-677 show a composition bias toward acidic residues; it reads PKDEVEEVSDDDEKEP. At Ser-670 the chain carries Phosphoserine. Tyr-681 is modified (phosphotyrosine; by ABL1). The Protein kinase domain maps to 696–951; that stretch reads YDIEERLGSG…CTQCLQHPWL (256 aa). ATP is bound by residues 702-710 and Lys-725; that span reads LGSGKFGQV. Tyr-807 carries the phosphotyrosine; by ABL1 modification. Asp-817 acts as the Proton acceptor in catalysis. Residue Tyr-867 is modified to Phosphotyrosine; by ABL1. Positions 943-1006 are calmodulin-binding; it reads TQCLQHPWLM…SGLSGRKSST (64 aa). 5 positions are modified to phosphoserine: Ser-991, Ser-992, Ser-1004, Ser-1005, and Ser-1008. Positions 999–1019 are disordered; that stretch reads LSGRKSSTGSPTSPLTAERLE. The segment covering 1002-1013 has biased composition (polar residues); that stretch reads RKSSTGSPTSPL. Residue Thr-1010 is modified to Phosphothreonine. Ser-1011 carries the phosphoserine modification. An Ig-like C2-type 3 domain is found at 1041–1130; that stretch reads PYFSKTIRDL…GEATCTAELI (90 aa). Cys-1062 and Cys-1114 form a disulfide bridge.

It belongs to the protein kinase superfamily. CAMK Ser/Thr protein kinase family. All isoforms including Telokin bind calmodulin. Interacts with SVIL. Interacts with CTTN; this interaction is reduced during thrombin-induced endothelial cell (EC) contraction but is promoted by the barrier-protective agonist sphingosine 1-phosphate (S1P) within lamellipodia. A complex made of ABL1, CTTN and MYLK regulates cortical actin-based cytoskeletal rearrangement critical to sphingosine 1-phosphate (S1P)-mediated endothelial cell (EC) barrier enhancement. Binds to NAA10/ARD1 and PTK2B/PYK2. Mg(2+) serves as cofactor. Ca(2+) is required as a cofactor. In terms of processing, the C-terminus is deglutamylated by AGTPBP1/CCP1, AGBL1/CCP4 and AGBL4/CCP6, leading to the formation of Myosin light chain kinase, smooth muscle, deglutamylated form. The consequences of C-terminal deglutamylation are unknown. Can probably be down-regulated by phosphorylation. Tyrosine phosphorylation by ABL1 increases kinase activity, reverses MLCK-mediated inhibition of Arp2/3-mediated actin polymerization, and enhances CTTN-binding. Phosphorylation by SRC promotes CTTN binding. As to expression, isoform Telokin is found in all smooth muscle tested except the aorta. It is not present in non-muscle tissue.

Its subcellular location is the cytoplasm. The protein localises to the cell projection. The protein resides in the lamellipodium. It localises to the cleavage furrow. It is found in the cytoskeleton. Its subcellular location is the stress fiber. It catalyses the reaction L-seryl-[myosin light chain] + ATP = O-phospho-L-seryl-[myosin light chain] + ADP + H(+). The catalysed reaction is L-threonyl-[myosin light chain] + ATP = O-phospho-L-threonyl-[myosin light chain] + ADP + H(+). All catalytically active isoforms require binding to calcium and calmodulin for activation. Its function is as follows. Calcium/calmodulin-dependent myosin light chain kinase implicated in smooth muscle contraction via phosphorylation of myosin light chains (MLC). Also regulates actin-myosin interaction through a non-kinase activity. Phosphorylates PTK2B/PYK2 and myosin light-chains. Involved in the inflammatory response (e.g. apoptosis, vascular permeability, leukocyte diapedesis), cell motility and morphology, airway hyperreactivity and other activities relevant to asthma. Required for tonic airway smooth muscle contraction that is necessary for physiological and asthmatic airway resistance. Necessary for gastrointestinal motility. Implicated in the regulation of endothelial as well as vascular permeability, probably via the regulation of cytoskeletal rearrangements. In the nervous system it has been shown to control the growth initiation of astrocytic processes in culture and to participate in transmitter release at synapses formed between cultured sympathetic ganglion cells. Critical participant in signaling sequences that result in fibroblast apoptosis. Plays a role in the regulation of epithelial cell survival. Required for epithelial wound healing, especially during actomyosin ring contraction during purse-string wound closure. Mediates RhoA-dependent membrane blebbing. Triggers TRPC5 channel activity in a calcium-dependent signaling, by inducing its subcellular localization at the plasma membrane. Promotes cell migration (including tumor cells) and tumor metastasis. PTK2B/PYK2 activation by phosphorylation mediates ITGB2 activation and is thus essential to trigger neutrophil transmigration during acute lung injury (ALI). May regulate optic nerve head astrocyte migration. Probably involved in mitotic cytoskeletal regulation. Regulates tight junction probably by modulating ZO-1 exchange in the perijunctional actomyosin ring. Mediates burn-induced microvascular barrier injury; triggers endothelial contraction in the development of microvascular hyperpermeability by phosphorylating MLC. Essential for intestinal barrier dysfunction. Mediates Giardia spp.-mediated reduced epithelial barrier function during giardiasis intestinal infection via reorganization of cytoskeletal F-actin and tight junctional ZO-1. Necessary for hypotonicity-induced Ca(2+) entry and subsequent activation of volume-sensitive organic osmolyte/anion channels (VSOAC) in cervical cancer cells. The polypeptide is Myosin light chain kinase, smooth muscle (MYLK) (Oryctolagus cuniculus (Rabbit)).